We begin with the raw amino-acid sequence, 198 residues long: Glycerol-3-phosphate acyltransferase (198 aa).

Helical transmembrane passes span 6 to 26 (MLPV…GLIL), 56 to 78 (LAAA…AGYL), 83 to 101 (AAML…PVWL), 113 to 133 (IGIL…VWLA), and 154 to 174 (IVLW…LTLL).

It belongs to the PlsY family. In terms of assembly, probably interacts with PlsX.

Its subcellular location is the cell inner membrane. It carries out the reaction an acyl phosphate + sn-glycerol 3-phosphate = a 1-acyl-sn-glycero-3-phosphate + phosphate. The protein operates within lipid metabolism; phospholipid metabolism. Catalyzes the transfer of an acyl group from acyl-phosphate (acyl-PO(4)) to glycerol-3-phosphate (G3P) to form lysophosphatidic acid (LPA). This enzyme utilizes acyl-phosphate as fatty acyl donor, but not acyl-CoA or acyl-ACP. This Bradyrhizobium sp. (strain ORS 278) protein is Glycerol-3-phosphate acyltransferase.